Here is a 242-residue protein sequence, read N- to C-terminus: Biosynthetic peptidoglycan transglycosylase (242 aa).

Residues 18–38 (VIMAVLCIAILYQLWMFSLVV) form a helical membrane-spanning segment.

Belongs to the glycosyltransferase 51 family.

It is found in the cell inner membrane. The enzyme catalyses [GlcNAc-(1-&gt;4)-Mur2Ac(oyl-L-Ala-gamma-D-Glu-L-Lys-D-Ala-D-Ala)](n)-di-trans,octa-cis-undecaprenyl diphosphate + beta-D-GlcNAc-(1-&gt;4)-Mur2Ac(oyl-L-Ala-gamma-D-Glu-L-Lys-D-Ala-D-Ala)-di-trans,octa-cis-undecaprenyl diphosphate = [GlcNAc-(1-&gt;4)-Mur2Ac(oyl-L-Ala-gamma-D-Glu-L-Lys-D-Ala-D-Ala)](n+1)-di-trans,octa-cis-undecaprenyl diphosphate + di-trans,octa-cis-undecaprenyl diphosphate + H(+). It participates in cell wall biogenesis; peptidoglycan biosynthesis. Functionally, peptidoglycan polymerase that catalyzes glycan chain elongation from lipid-linked precursors. The sequence is that of Biosynthetic peptidoglycan transglycosylase from Bordetella bronchiseptica (strain ATCC BAA-588 / NCTC 13252 / RB50) (Alcaligenes bronchisepticus).